A 1065-amino-acid chain; its full sequence is Cellulose synthase A catalytic subunit 3 [UDP-forming] (1065 aa).

Residues 1–260 lie on the Cytoplasmic side of the membrane; the sequence is MESEGETAGK…PSSRINPYRM (260 aa). A Phosphoserine modification is found at Ser-3. Residues Cys-20, Cys-23, Cys-39, Cys-42, Cys-47, Cys-50, Cys-62, and Cys-65 each contribute to the Zn(2+) site. The segment at 20–66 adopts an RING-type; degenerate zinc-finger fold; it reads CQICSDNVGKTVDGDRFVACDICSFPVCRPCYEYERKDGNQSCPQCK. A phosphoserine mark is found at Ser-151, Ser-211, and Ser-216. A helical transmembrane segment spans residues 261–281; the sequence is VIMLRLVILCLFLHYRITNPV. The Extracellular segment spans residues 282-283; it reads PN. A helical membrane pass occupies residues 284–304; it reads AFALWLVSVICEIWFALSWIL. At 305–842 the chain is on the cytoplasmic side; that stretch reads DQFPKWFPVN…LERFAYVNTT (538 aa). 4 residues coordinate UDP-alpha-D-glucose: Ser-343, Lys-349, Glu-350, and Asp-379. Residue Asp-379 is part of the active site. Residues 433–457 are a coiled coil; that stretch reads VKDRRAMKREYEEFKIRINALVSKA. UDP-alpha-D-glucose is bound at residue Lys-520. Mn(2+)-binding residues include Lys-521 and Asp-545. Positions 643-672 are disordered; sequence SKLCGGSRKKNSKAKKESDKKKSGRHTDST. The segment covering 656–670 has biased composition (basic and acidic residues); the sequence is AKKESDKKKSGRHTD. Residue Asp-765 is part of the active site. The helical transmembrane segment at 843 to 863 threads the bilayer; that stretch reads IYPITSIPLLMYCTLPAVCLF. The Extracellular portion of the chain corresponds to 864-874; that stretch reads TNQFIIPQISN. Residues 875–895 form a helical membrane-spanning segment; the sequence is IASIWFLSLFLSIFATGILEM. Topologically, residues 896–910 are cytoplasmic; that stretch reads RWSGVGIDEWWRNEQ. The chain crosses the membrane as a helical span at residues 911 to 931; it reads FWVIGGVSAHLFAVFQGILKV. At 932 to 961 the chain is on the extracellular side; it reads LAGIDTNFTVTSKASDEDGDFAELYLFKWT. A glycan (N-linked (GlcNAc...) asparagine) is linked at Asn-938. A helical membrane pass occupies residues 962 to 982; it reads TLLIPPTTLLIVNLVGVVAGV. Residues 983-993 are Cytoplasmic-facing; it reads SYAINSGYQSW. Residues 994 to 1014 traverse the membrane as a helical segment; the sequence is GPLFGKLFFAFWVIVHLYPFL. Residues 1015-1023 lie on the Extracellular side of the membrane; it reads KGLMGRQNR. Residues 1024–1044 traverse the membrane as a helical segment; that stretch reads TPTIVVVWSVLLASIFSLLWV. The Cytoplasmic portion of the chain corresponds to 1045 to 1065; it reads RIDPFTSRVTGPDILECGINC.

This sequence belongs to the glycosyltransferase 2 family. Plant cellulose synthase subfamily. Homodimer. Interacts with CESA1 and CESA6. Interacts with STL1 and STL2, but not with GOT1. Binds to CSI1 and CSI3. Interacts with PAT24/TIP1. Zn(2+) serves as cofactor. The cofactor is Mn(2+). Post-translationally, palmitoylated, in part by PAT24/TIP1. Expressed in young plants, flowers and roots, and to a lower extent in leaves and stems. Localized in all cells except meristematic cells. Accumulates particularly in root caps, root hairs, epidermal layer, midveins of leaves and anthers. Not present in old tissues.

The protein resides in the cell membrane. The protein localises to the golgi apparatus membrane. The enzyme catalyses [(1-&gt;4)-beta-D-glucosyl](n) + UDP-alpha-D-glucose = [(1-&gt;4)-beta-D-glucosyl](n+1) + UDP + H(+). It participates in glycan metabolism; plant cellulose biosynthesis. Catalytic subunit of cellulose synthase terminal complexes ('rosettes'), required for beta-1,4-glucan microfibril crystallization, a major mechanism of the cell wall formation. Involved in the primary cell wall formation, especially in roots. The sequence is that of Cellulose synthase A catalytic subunit 3 [UDP-forming] from Arabidopsis thaliana (Mouse-ear cress).